The chain runs to 648 residues: MTTEHAAGAQTLNFQAEVKQLLHLMIHSLYSNREIFLRELVSNASDACDKLRFEALDKPELFEGDSELAIRVGFDSEAKTVTVSDNGIGMSRDEVITHLGTIAKSGTKEFFSQLTGDQKKDAHLIGQFGVGFYSAFIVADKVTVVTRRAGLAAAEGVKWECAMTGDAAGEYTVEAIEKAARGTEITLHLREGQEDLLSGWKLRGLIRKYSDHIVQPILMKKEEWDKDKNEQVTTDEDETVNQANALWTRSRNDITEEEYKGFYKHVGHDFDEPLAWTHARVEGRHEYTQLLYIPSHAPFDMWDRNARHGIKLYVKRVFIMDDAEKLMPAYLRFVRGVVDSSDLPLNVSREILQESKDIDTIRSGCTKKVLGLLESLATSDEAADREKYATFWKEFGPVLKEGVGEDFANKDKIAGLLRFASTHADTPDEVVSLADYLARMKEGQDKIYYVTAESFNAAKNSPHLEIFRKKGIEVLLLTDRVDEWVIGNLPEFDGKALVSVAKGGLDLGKLEDEAEKKETEKAADEYKELLEKMKASLGERVKEVRVTHRLTDSPACLVADEHDVGMNLARILKAAGQQAPASKPILEINPQHPAVMRLKYEERQFDDWAAVLFDQALLAEGGTLDDPATFVKRINQLMMAMGGSAGTD.

The segment at 1–349 is a; substrate-binding; the sequence is MTTEHAAGAQ…SSDLPLNVSR (349 aa). The tract at residues 350–570 is b; the sequence is EILQESKDID…EHDVGMNLAR (221 aa). Residues 571–648 form a c region; that stretch reads ILKAAGQQAP…MAMGGSAGTD (78 aa).

This sequence belongs to the heat shock protein 90 family. As to quaternary structure, homodimer.

It localises to the cytoplasm. Molecular chaperone. Has ATPase activity. The sequence is that of Chaperone protein HtpG from Aromatoleum aromaticum (strain DSM 19018 / LMG 30748 / EbN1) (Azoarcus sp. (strain EbN1)).